We begin with the raw amino-acid sequence, 215 residues long: LexA repressor (215 aa).

The segment at residues 28-48 (RAEIAAELGFSSPNAAEEHLR) is a DNA-binding region (H-T-H motif). Catalysis depends on for autocatalytic cleavage activity residues Ser133 and Lys170.

Belongs to the peptidase S24 family. Homodimer.

It catalyses the reaction Hydrolysis of Ala-|-Gly bond in repressor LexA.. Functionally, represses a number of genes involved in the response to DNA damage (SOS response), including recA and lexA. In the presence of single-stranded DNA, RecA interacts with LexA causing an autocatalytic cleavage which disrupts the DNA-binding part of LexA, leading to derepression of the SOS regulon and eventually DNA repair. This Burkholderia cenocepacia (strain HI2424) protein is LexA repressor.